A 380-amino-acid chain; its full sequence is MAPNLRKSHPLLKLINNSLIDLPTPSNISAWWNFGSLLGICLLTQILTGLLLATHYTADTTLAFSSVAHTCRNVQYGWLIRNLHANGASFFFICIYLHIGRGFYYGSYLNKETWNTGIILLLTLMATAFVGYVLPWGQMSFWGATVITNLFSAIPYIGQTLVEWAWGGFSVDNPTLTRFFALHFLLPFMIAGLALIHLTFLHESGSNNPLGILSNCDKIPFHPYFSLKDILGFIIMFLPLTTLALFSPNLLGDPENFTPANPLVTPPHIKPEWYFLFAYAILRSIPNKLGGVLALAASVLVLFLVPLLHKSKQRAMTFRPLSQFLFWTLVANLLILTWVGSQPVEHPFIIIGQLASLTYFTILLLLFPIIGALENKMLNY.

4 consecutive transmembrane segments (helical) span residues 34–54, 78–99, 114–134, and 179–199; these read FGSL…LLAT, WLIR…YLHI, WNTG…GYVL, and FFAL…IHLT. Heme b contacts are provided by histidine 84 and histidine 98. Histidine 183 and histidine 197 together coordinate heme b. Histidine 202 is an a ubiquinone binding site. 4 helical membrane-spanning segments follow: residues 227–247, 289–309, 321–341, and 348–368; these read LKDI…ALFS, LGGV…PLLH, LSQF…WVGS, and FIII…LLFP.

This sequence belongs to the cytochrome b family. The cytochrome bc1 complex contains 11 subunits: 3 respiratory subunits (MT-CYB, CYC1 and UQCRFS1), 2 core proteins (UQCRC1 and UQCRC2) and 6 low-molecular weight proteins (UQCRH/QCR6, UQCRB/QCR7, UQCRQ/QCR8, UQCR10/QCR9, UQCR11/QCR10 and a cleavage product of UQCRFS1). This cytochrome bc1 complex then forms a dimer. Heme b is required as a cofactor.

The protein resides in the mitochondrion inner membrane. Its function is as follows. Component of the ubiquinol-cytochrome c reductase complex (complex III or cytochrome b-c1 complex) that is part of the mitochondrial respiratory chain. The b-c1 complex mediates electron transfer from ubiquinol to cytochrome c. Contributes to the generation of a proton gradient across the mitochondrial membrane that is then used for ATP synthesis. The polypeptide is Cytochrome b (MT-CYB) (Pinguinus impennis (Great auk)).